A 285-amino-acid polypeptide reads, in one-letter code: Nucleotide-binding protein Psyr_4150 (285 aa).

Residue 8 to 15 (GRSGSGKS) coordinates ATP. 60–63 (DARN) is a binding site for GTP.

Belongs to the RapZ-like family.

In terms of biological role, displays ATPase and GTPase activities. The sequence is that of Nucleotide-binding protein Psyr_4150 from Pseudomonas syringae pv. syringae (strain B728a).